The following is a 190-amino-acid chain: U1 small nuclear ribonucleoprotein C-1 (190 aa).

Residues 4 to 36 (YYCDYCDVFLVSESPSVRKAHNSGRNHLTNVRD) form a Matrin-type zinc finger. The segment at 57–190 (FETGGGNSTS…PDRARQLGLI (134 aa)) is disordered. Residues 72–82 (GNPPGSQPGPP) are compositionally biased toward pro residues. Residues 109–124 (AMLALMNGQNGMSSPG) are compositionally biased toward low complexity. The span at 125–141 (SGPPPMRFAGPPIPNNM) shows a compositional bias: pro residues. The span at 180–190 (NPDRARQLGLI) shows a compositional bias: basic and acidic residues.

This sequence belongs to the U1 small nuclear ribonucleoprotein C family. As to quaternary structure, U1 snRNP is composed of the 7 core Sm proteins B/B', D1, D2, D3, E, F and G that assemble in a heptameric protein ring on the Sm site of the small nuclear RNA to form the core snRNP, and at least 3 U1 snRNP-specific proteins U1-70K, U1-A and U1-C. U1-C interacts with U1 snRNA and the 5' splice-site region of the pre-mRNA.

Its subcellular location is the nucleus. Its function is as follows. Component of the spliceosomal U1 snRNP, which is essential for recognition of the pre-mRNA 5' splice-site and the subsequent assembly of the spliceosome. U1-C is directly involved in initial 5' splice-site recognition for both constitutive and regulated alternative splicing. The interaction with the 5' splice-site seems to precede base-pairing between the pre-mRNA and the U1 snRNA. Stimulates commitment or early (E) complex formation by stabilizing the base pairing of the 5' end of the U1 snRNA and the 5' splice-site region. This chain is U1 small nuclear ribonucleoprotein C-1, found in Puccinia graminis f. sp. tritici (strain CRL 75-36-700-3 / race SCCL) (Black stem rust fungus).